Here is a 428-residue protein sequence, read N- to C-terminus: Glutamine synthetase leaf isozyme, chloroplastic (428 aa).

A chloroplast-targeting transit peptide spans 1–49 (MAQILAPSIQCQTRITKTSPLATPISSKMWSSLVMKQNKKVARSAKFRV). Residues 75-155 (IIAEYIWIGG…VICDAYTPQG (81 aa)) form the GS beta-grasp domain. One can recognise a GS catalytic domain in the interval 159–428 (PTNKRHKAAE…LAAQKIALKV (270 aa)).

This sequence belongs to the glutamine synthetase family. Homooctamer.

It is found in the plastid. The protein localises to the chloroplast. The catalysed reaction is L-glutamate + NH4(+) + ATP = L-glutamine + ADP + phosphate + H(+). In terms of biological role, the light-modulated chloroplast enzyme, encoded by a nuclear gene and expressed primarily in leaves, is responsible for the reassimilation of the ammonia generated by photorespiration. The sequence is that of Glutamine synthetase leaf isozyme, chloroplastic (GS2) from Medicago sativa (Alfalfa).